Here is a 30-residue protein sequence, read N- to C-terminus: Brevinin-2Ej (30 aa).

A disulfide bond links Cys-24 and Cys-30.

In terms of tissue distribution, expressed by the skin glands.

It localises to the secreted. Its function is as follows. Shows antibacterial activity against representative Gram-negative and Gram-positive bacterial species, and hemolytic activity. The polypeptide is Brevinin-2Ej (Pelophylax ridibundus (Marsh frog)).